Here is a 369-residue protein sequence, read N- to C-terminus: MSFGIDDLPVRDELRGKSPYGAPQLDVPVRLNTNENPYPLPEPLVERIAERVREAARHLNRYPDRDAVELRTELATYLTNTGKHPVGIENVWAANGSNEVIQQLLQTFGGPGRTAIGFEPSYSMHALIARGTGTAWISGPRGEDFTIDLAAARQAIAESRPDVVFITTPNNPTGTAVPPETVLALYEAAQAVKPSMVVVDEAYIEFSHGDSLLPLLEGRPHLVVSRTMSKAFGAAGLRLGYLAAHPAVVDAVQLVRLPYHLSAITQATALAALEHTDTLLGYVEQLKAERDRLVAELRAIGYDVTESDANFVQFGRFADAHEVWQQILDRGVLVRDNGVPGWLRVSAGTPEENDAFLDAVRELKKEQNA.

Residues 1–39 form a disordered region; it reads MSFGIDDLPVRDELRGKSPYGAPQLDVPVRLNTNENPYP. Position 230 is an N6-(pyridoxal phosphate)lysine (Lys-230).

It belongs to the class-II pyridoxal-phosphate-dependent aminotransferase family. Histidinol-phosphate aminotransferase subfamily. In terms of assembly, homodimer. Pyridoxal 5'-phosphate is required as a cofactor.

It carries out the reaction L-histidinol phosphate + 2-oxoglutarate = 3-(imidazol-4-yl)-2-oxopropyl phosphate + L-glutamate. It participates in amino-acid biosynthesis; L-histidine biosynthesis; L-histidine from 5-phospho-alpha-D-ribose 1-diphosphate: step 7/9. This is Histidinol-phosphate aminotransferase (hisC) from Streptomyces avermitilis (strain ATCC 31267 / DSM 46492 / JCM 5070 / NBRC 14893 / NCIMB 12804 / NRRL 8165 / MA-4680).